The chain runs to 203 residues: SPbeta prophage-derived uncharacterized lipoprotein YonS (203 aa).

The N-terminal stretch at 1 to 21 (MKLFKKLGILLLITSLILLAA) is a signal peptide. The N-palmitoyl cysteine moiety is linked to residue cysteine 22. The S-diacylglycerol cysteine moiety is linked to residue cysteine 22. The segment covering 27-46 (ESSSSSEDTNNATDTNTSES) has biased composition (low complexity). Residues 27–57 (ESSSSSEDTNNATDTNTSESQDISVNGPEKV) form a disordered region.

Its subcellular location is the cell membrane. The chain is SPbeta prophage-derived uncharacterized lipoprotein YonS (yonS) from Bacillus subtilis (strain 168).